The following is a 357-amino-acid chain: DNA replication and repair protein RecF (357 aa).

30–37 (GANGSGKT) contacts ATP.

The protein belongs to the RecF family.

The protein resides in the cytoplasm. In terms of biological role, the RecF protein is involved in DNA metabolism; it is required for DNA replication and normal SOS inducibility. RecF binds preferentially to single-stranded, linear DNA. It also seems to bind ATP. The protein is DNA replication and repair protein RecF of Salmonella paratyphi B (strain ATCC BAA-1250 / SPB7).